Consider the following 142-residue polypeptide: MKHGIKKRKLSRCTEHRLSTLKNLSISLINHEQIVTTLPKAKELRPYVEKFITIAKNKNTLHGRRLLLSRLHNSKLAVDKLLNVLASRYQDRKGGYSRIIKFSTRKGDCASMAVIELVDRDIAARGKVYSKNKEGGKVVTQS.

Belongs to the bacterial ribosomal protein bL17 family. As to quaternary structure, part of the 50S ribosomal subunit. Contacts protein L32.

This chain is Large ribosomal subunit protein bL17, found in Wolbachia pipientis wMel.